The primary structure comprises 647 residues: DNA mismatch repair protein MutL (647 aa).

The protein belongs to the DNA mismatch repair MutL/HexB family.

In terms of biological role, this protein is involved in the repair of mismatches in DNA. It is required for dam-dependent methyl-directed DNA mismatch repair. May act as a 'molecular matchmaker', a protein that promotes the formation of a stable complex between two or more DNA-binding proteins in an ATP-dependent manner without itself being part of a final effector complex. In Bacillus thuringiensis subsp. konkukian (strain 97-27), this protein is DNA mismatch repair protein MutL.